The chain runs to 418 residues: Tryptophan synthase beta chain (418 aa).

Over residues 1–18 (MTSTLPNASTPDPASLQP) the composition is skewed to polar residues. The disordered stretch occupies residues 1–23 (MTSTLPNASTPDPASLQPSVRPG). The residue at position 111 (Lys-111) is an N6-(pyridoxal phosphate)lysine.

Belongs to the TrpB family. In terms of assembly, tetramer of two alpha and two beta chains. The cofactor is pyridoxal 5'-phosphate.

The enzyme catalyses (1S,2R)-1-C-(indol-3-yl)glycerol 3-phosphate + L-serine = D-glyceraldehyde 3-phosphate + L-tryptophan + H2O. Its pathway is amino-acid biosynthesis; L-tryptophan biosynthesis; L-tryptophan from chorismate: step 5/5. In terms of biological role, the beta subunit is responsible for the synthesis of L-tryptophan from indole and L-serine. The polypeptide is Tryptophan synthase beta chain (Parasynechococcus marenigrum (strain WH8102)).